We begin with the raw amino-acid sequence, 550 residues long: Chaperonin GroEL (550 aa).

ATP-binding positions include 30-33 (TLGP), Lys51, 87-91 (DGTTT), Gly415, 479-481 (NAA), and Asp495.

The protein belongs to the chaperonin (HSP60) family. In terms of assembly, forms a cylinder of 14 subunits composed of two heptameric rings stacked back-to-back. Interacts with the co-chaperonin GroES.

It is found in the cytoplasm. The enzyme catalyses ATP + H2O + a folded polypeptide = ADP + phosphate + an unfolded polypeptide.. Its function is as follows. Together with its co-chaperonin GroES, plays an essential role in assisting protein folding. The GroEL-GroES system forms a nano-cage that allows encapsulation of the non-native substrate proteins and provides a physical environment optimized to promote and accelerate protein folding. This Polaromonas sp. (strain JS666 / ATCC BAA-500) protein is Chaperonin GroEL.